The primary structure comprises 534 residues: Bifunctional purine biosynthesis protein PurH (534 aa).

Residues 6 to 151 (TRLPVRRALI…KNHKDVAIVV (146 aa)) form the MGS-like domain.

This sequence belongs to the PurH family.

The catalysed reaction is (6R)-10-formyltetrahydrofolate + 5-amino-1-(5-phospho-beta-D-ribosyl)imidazole-4-carboxamide = 5-formamido-1-(5-phospho-D-ribosyl)imidazole-4-carboxamide + (6S)-5,6,7,8-tetrahydrofolate. It carries out the reaction IMP + H2O = 5-formamido-1-(5-phospho-D-ribosyl)imidazole-4-carboxamide. It participates in purine metabolism; IMP biosynthesis via de novo pathway; 5-formamido-1-(5-phospho-D-ribosyl)imidazole-4-carboxamide from 5-amino-1-(5-phospho-D-ribosyl)imidazole-4-carboxamide (10-formyl THF route): step 1/1. Its pathway is purine metabolism; IMP biosynthesis via de novo pathway; IMP from 5-formamido-1-(5-phospho-D-ribosyl)imidazole-4-carboxamide: step 1/1. In Stutzerimonas stutzeri (strain A1501) (Pseudomonas stutzeri), this protein is Bifunctional purine biosynthesis protein PurH.